The chain runs to 297 residues: 4-hydroxy-tetrahydrodipicolinate synthase (297 aa).

T46 contributes to the pyruvate binding site. The active-site Proton donor/acceptor is the Y134. Catalysis depends on K162, which acts as the Schiff-base intermediate with substrate. I209 contributes to the pyruvate binding site.

This sequence belongs to the DapA family. In terms of assembly, homotetramer; dimer of dimers.

The protein localises to the cytoplasm. The enzyme catalyses L-aspartate 4-semialdehyde + pyruvate = (2S,4S)-4-hydroxy-2,3,4,5-tetrahydrodipicolinate + H2O + H(+). The protein operates within amino-acid biosynthesis; L-lysine biosynthesis via DAP pathway; (S)-tetrahydrodipicolinate from L-aspartate: step 3/4. Its function is as follows. Catalyzes the condensation of (S)-aspartate-beta-semialdehyde [(S)-ASA] and pyruvate to 4-hydroxy-tetrahydrodipicolinate (HTPA). The polypeptide is 4-hydroxy-tetrahydrodipicolinate synthase (Methanosphaera stadtmanae (strain ATCC 43021 / DSM 3091 / JCM 11832 / MCB-3)).